Consider the following 266-residue polypeptide: Phosphatidylglycerol--prolipoprotein diacylglyceryl transferase (266 aa).

7 consecutive transmembrane segments (helical) span residues 21–41 (LAIR…MWLA), 60–80 (LLFA…VLFY), 95–115 (VWTG…AMLW), 124–144 (FFSV…MGRM), 176–196 (SQLY…NIFI), 203–223 (GAVS…IEYF), and 236–256 (WISM…LLML). Arginine 143 is an a 1,2-diacyl-sn-glycero-3-phospho-(1'-sn-glycerol) binding site.

This sequence belongs to the Lgt family.

It is found in the cell inner membrane. It carries out the reaction L-cysteinyl-[prolipoprotein] + a 1,2-diacyl-sn-glycero-3-phospho-(1'-sn-glycerol) = an S-1,2-diacyl-sn-glyceryl-L-cysteinyl-[prolipoprotein] + sn-glycerol 1-phosphate + H(+). It functions in the pathway protein modification; lipoprotein biosynthesis (diacylglyceryl transfer). In terms of biological role, catalyzes the transfer of the diacylglyceryl group from phosphatidylglycerol to the sulfhydryl group of the N-terminal cysteine of a prolipoprotein, the first step in the formation of mature lipoproteins. This is Phosphatidylglycerol--prolipoprotein diacylglyceryl transferase from Photobacterium profundum (strain SS9).